Here is a 123-residue protein sequence, read N- to C-terminus: Small ribosomal subunit protein uS12 (123 aa).

Asp-89 is subject to 3-methylthioaspartic acid.

The protein belongs to the universal ribosomal protein uS12 family. As to quaternary structure, part of the 30S ribosomal subunit. Contacts proteins S8 and S17. May interact with IF1 in the 30S initiation complex.

In terms of biological role, with S4 and S5 plays an important role in translational accuracy. Interacts with and stabilizes bases of the 16S rRNA that are involved in tRNA selection in the A site and with the mRNA backbone. Located at the interface of the 30S and 50S subunits, it traverses the body of the 30S subunit contacting proteins on the other side and probably holding the rRNA structure together. The combined cluster of proteins S8, S12 and S17 appears to hold together the shoulder and platform of the 30S subunit. The protein is Small ribosomal subunit protein uS12 of Brucella anthropi (strain ATCC 49188 / DSM 6882 / CCUG 24695 / JCM 21032 / LMG 3331 / NBRC 15819 / NCTC 12168 / Alc 37) (Ochrobactrum anthropi).